Reading from the N-terminus, the 351-residue chain is Xaa-Pro dipeptidase (351 aa).

Co(2+)-binding residues include aspartate 212, aspartate 223, histidine 287, glutamate 316, and glutamate 330.

Belongs to the peptidase M24B family. Archaeal-type prolidase subfamily. As to quaternary structure, homodimer. Requires Co(2+) as cofactor.

The protein localises to the cytoplasm. It carries out the reaction Xaa-L-Pro dipeptide + H2O = an L-alpha-amino acid + L-proline. Splits dipeptides with a prolyl in the C-terminal position and a nonpolar amino acid at the N-terminal position. The protein is Xaa-Pro dipeptidase (pepQ) of Pyrococcus horikoshii (strain ATCC 700860 / DSM 12428 / JCM 9974 / NBRC 100139 / OT-3).